The sequence spans 235 residues: Regulator of G-protein signaling 9-binding protein (235 aa).

Over 1-210 (MAREECKALL…ERGGGCDPRK (210 aa)) the chain is Cytoplasmic. Coiled coils occupy residues 29–54 (GSADSQNLRQELQKTRQKAQELAVST) and 144–169 (VADLRELEREVLQVGEMIDNMEMKVN). An SNARE-like region spans residues 153-200 (EVLQVGEMIDNMEMKVNVPRWTVQARQAAGAELLSTVSAGPSSVVSLQ). A helical; Anchor for type IV membrane protein transmembrane segment spans residues 211–231 (ALAAILFGAVLLAAVALAVCV). The Extracellular segment spans residues 232 to 235 (AKLS).

Belongs to the RGS7BP/RGS9BP family. As to quaternary structure, specifically interacts with isoform RGS9-1 of RGS9. Component of the RGS9-1-Gbeta5 complex composed of RGS9-1, Gbeta5 (GNB5) and RGS9BP.

The protein resides in the membrane. Its function is as follows. Regulator of G protein-coupled receptor (GPCR) signaling in phototransduction. Participates in the recovery phase of visual transduction via its interaction with RGS9-1 isoform. Acts as a membrane-anchor that mediates the targeting of RGS9-1 to the photoreceptor outer segment, where phototransduction takes place. Enhances the ability of RGS9-1 to stimulate G protein GTPase activity, allowing the visual signal to be terminated on the physiologically time scale. It also controls the proteolytic stability of RGS9-1, probably by protecting it from degradation. This chain is Regulator of G-protein signaling 9-binding protein (RGS9BP), found in Homo sapiens (Human).